Here is a 481-residue protein sequence, read N- to C-terminus: UDP-N-acetylmuramoylalanine--D-glutamate ligase (481 aa).

108–114 (GTNGKTS) is a binding site for ATP.

This sequence belongs to the MurCDEF family.

It localises to the cytoplasm. It carries out the reaction UDP-N-acetyl-alpha-D-muramoyl-L-alanine + D-glutamate + ATP = UDP-N-acetyl-alpha-D-muramoyl-L-alanyl-D-glutamate + ADP + phosphate + H(+). Its pathway is cell wall biogenesis; peptidoglycan biosynthesis. In terms of biological role, cell wall formation. Catalyzes the addition of glutamate to the nucleotide precursor UDP-N-acetylmuramoyl-L-alanine (UMA). This chain is UDP-N-acetylmuramoylalanine--D-glutamate ligase, found in Bifidobacterium longum (strain DJO10A).